We begin with the raw amino-acid sequence, 545 residues long: Glucose-6-phosphate isomerase (545 aa).

The active-site Proton donor is Glu351. Residues His382 and Lys510 contribute to the active site.

It belongs to the GPI family.

It is found in the cytoplasm. It carries out the reaction alpha-D-glucose 6-phosphate = beta-D-fructose 6-phosphate. The protein operates within carbohydrate biosynthesis; gluconeogenesis. Its pathway is carbohydrate degradation; glycolysis; D-glyceraldehyde 3-phosphate and glycerone phosphate from D-glucose: step 2/4. In terms of biological role, catalyzes the reversible isomerization of glucose-6-phosphate to fructose-6-phosphate. The polypeptide is Glucose-6-phosphate isomerase (Shewanella sp. (strain MR-4)).